Here is a 155-residue protein sequence, read N- to C-terminus: MAPK regulated corepressor interacting protein 2 (155 aa).

M1 is subject to N-acetylmethionine. The tract at residues 1–59 (MYTITKGPSKLVAQRRTGPTQQQVESRLGELLKCRHSAPTPQHPRAQPPGPWPLSSPGP) is disordered. The residue at position 35 (R35) is an Omega-N-methylarginine. A compositionally biased stretch (pro residues) spans 46–56 (AQPPGPWPLSS). The residue at position 56 (S56) is a Phosphoserine. R60 bears the Omega-N-methylarginine mark. Phosphoserine is present on S77.

The protein belongs to the MCRIP family. As to quaternary structure, interacts with DDX6. Interacts with MCRIP1.

It is found in the cytoplasm. Its subcellular location is the stress granule. The protein localises to the nucleus. The protein is MAPK regulated corepressor interacting protein 2 (MCRIP2) of Bos taurus (Bovine).